Here is a 436-residue protein sequence, read N- to C-terminus: Gamma-glutamyl phosphate reductase (436 aa).

Belongs to the gamma-glutamyl phosphate reductase family.

Its subcellular location is the cytoplasm. It carries out the reaction L-glutamate 5-semialdehyde + phosphate + NADP(+) = L-glutamyl 5-phosphate + NADPH + H(+). Its pathway is amino-acid biosynthesis; L-proline biosynthesis; L-glutamate 5-semialdehyde from L-glutamate: step 2/2. Functionally, catalyzes the NADPH-dependent reduction of L-glutamate 5-phosphate into L-glutamate 5-semialdehyde and phosphate. The product spontaneously undergoes cyclization to form 1-pyrroline-5-carboxylate. The sequence is that of Gamma-glutamyl phosphate reductase from Prochlorococcus marinus (strain MIT 9515).